We begin with the raw amino-acid sequence, 122 residues long: Methylglyoxal synthase (122 aa).

Residues 1–122 (MRIALIAHDK…DLFIKHLKGK (122 aa)) enclose the MGS-like domain. Substrate contacts are provided by residues His8, Lys12, 34–37 (TGTT), and 54–55 (SG). The Proton donor/acceptor role is filled by Asp60. His87 contacts substrate.

It belongs to the methylglyoxal synthase family.

The enzyme catalyses dihydroxyacetone phosphate = methylglyoxal + phosphate. In terms of biological role, catalyzes the formation of methylglyoxal from dihydroxyacetone phosphate. The polypeptide is Methylglyoxal synthase (Acholeplasma laidlawii (strain PG-8A)).